The chain runs to 351 residues: Beta-hexosaminidase (351 aa).

Substrate contacts are provided by residues D62, R70, R133, and K163 to H164. H176 (proton donor/acceptor) is an active-site residue. The Nucleophile role is filled by D248.

The protein belongs to the glycosyl hydrolase 3 family. NagZ subfamily. As to quaternary structure, monomer.

It is found in the cytoplasm. The enzyme catalyses Hydrolysis of terminal non-reducing N-acetyl-D-hexosamine residues in N-acetyl-beta-D-hexosaminides.. It functions in the pathway cell wall biogenesis; peptidoglycan recycling. Its function is as follows. Plays a role in peptidoglycan recycling by cleaving the terminal beta-1,4-linked N-acetylglucosamine (GlcNAc) from peptide-linked peptidoglycan fragments, giving rise to free GlcNAc, anhydro-N-acetylmuramic acid and anhydro-N-acetylmuramic acid-linked peptides. The protein is Beta-hexosaminidase of Haemophilus influenzae (strain ATCC 51907 / DSM 11121 / KW20 / Rd).